The primary structure comprises 494 residues: Neuronal acetylcholine receptor subunit alpha-6 (494 aa).

A signal peptide spans 1–25; that stretch reads MLTSKGQGFLHGGLCLWLCVFTPFF. Residues 26 to 239 lie on the Extracellular side of the membrane; that stretch reads KGCVGCATEE…ITYSFYIRRL (214 aa). 2 N-linked (GlcNAc...) asparagine glycosylation sites follow: Asn-54 and Asn-171. 2 disulfide bridges follow: Cys-158–Cys-172 and Cys-222–Cys-223. 3 helical membrane-spanning segments follow: residues 240 to 264, 272 to 290, and 306 to 327; these read PMFY…VFYL, VTLC…LVIT, and YLLF…VLNI. Residues 328-465 are Cytoplasmic-facing; sequence HYRTPTTHTM…WKYVAMVVDR (138 aa). Ser-401 carries the phosphoserine modification. Residues 466 to 484 form a helical membrane-spanning segment; that stretch reads VFLWVFIIVCVFGTAGLFL.

The protein belongs to the ligand-gated ion channel (TC 1.A.9) family. Acetylcholine receptor (TC 1.A.9.1) subfamily. Alpha-6/CHRNA6 sub-subfamily. In terms of assembly, neuronal AChR is composed of two different types of subunits: alpha and non-alpha (beta). CHRNA6/alpha-6 subunit can be combined to CHRNB2/beta-2, CHRNA4/alpha-4 and CHRNB3/beta-3 to give rise to functional receptors. Heteropentamers containing CHRNB3 have an stoichiometry of (CHRNA6:CHRNB2)2:CHRNB3. Interacts with LYPD6.

The protein localises to the synaptic cell membrane. The enzyme catalyses Ca(2+)(in) = Ca(2+)(out). The catalysed reaction is K(+)(in) = K(+)(out). It carries out the reaction Na(+)(in) = Na(+)(out). Activated by a myriad of ligands such as acetylcholine, cytisine and nicotine. CHRNA6 nAChR activity is inhibited by the antagonists alpha-conotoxin MII and PIA, a small disulfide-constrained peptides from cone snails. In terms of biological role, component of neuronal acetylcholine receptors (nAChRs) that function as pentameric, ligand-gated cation channels with high calcium permeability among other activities. nAChRs are excitatory neurotrasnmitter receptors formed by a collection of nAChR subunits known to mediate synaptic transmission in the nervous system and the neuromuscular junction. Each nAchR subunit confers differential attributes to channel properties, including activation, deactivation and desensitization kinetics, pH sensitivity, cation permeability, and binding to allosteric modulators. CHRNA6 forms pentameric channels with CHRNB2, CHRNB3 and CHRNA4 that exhibit high sensitivity to ACh and nicotine and are predominantly expressed in only a few brain areas, including dopaminergic neurons, norepirephrine neurons and cells of the visual system. nAChrs containing CHRNA6 subunits mediate endogenous cholinergic modulation of dopamine and gamma-aminobutyric acid (GABA) release in response to nicotine at nerve terminals. This chain is Neuronal acetylcholine receptor subunit alpha-6 (CHRNA6), found in Pan troglodytes (Chimpanzee).